The primary structure comprises 354 residues: Chorismate synthase (354 aa).

R46 contributes to the NADP(+) binding site. Residues 123 to 125 (RSS), 239 to 240 (NA), G284, 299 to 303 (KPVAT), and R325 each bind FMN.

It belongs to the chorismate synthase family. In terms of assembly, homotetramer. The cofactor is FMNH2.

It carries out the reaction 5-O-(1-carboxyvinyl)-3-phosphoshikimate = chorismate + phosphate. It functions in the pathway metabolic intermediate biosynthesis; chorismate biosynthesis; chorismate from D-erythrose 4-phosphate and phosphoenolpyruvate: step 7/7. In terms of biological role, catalyzes the anti-1,4-elimination of the C-3 phosphate and the C-6 proR hydrogen from 5-enolpyruvylshikimate-3-phosphate (EPSP) to yield chorismate, which is the branch point compound that serves as the starting substrate for the three terminal pathways of aromatic amino acid biosynthesis. This reaction introduces a second double bond into the aromatic ring system. The polypeptide is Chorismate synthase (Azobacteroides pseudotrichonymphae genomovar. CFP2).